The chain runs to 695 residues: Follicle-stimulating hormone receptor (695 aa).

The N-terminal stretch at 1 to 17 (MALLLVSLLAFMSLGSG) is a signal peptide. Intrachain disulfides connect C18-C25 and C23-C32. Residues 18–46 (CHHRLCHCSNRVFLCQESKVTEIPSDLPR) form the LRRNT domain. The Extracellular segment spans residues 18 to 366 (CHHRLCHCSN…EDIMGYNILR (349 aa)). 9 LRR repeats span residues 49 to 72 (VELR…FGDL), 73 to 97 (EKIE…LPNL), 98 to 118 (HEIR…AFQN), 119 to 143 (LPNL…KIQS), 144 to 169 (LQKV…LGLS), 170 to 192 (SESV…AFNG), 193 to 216 (TQLD…VFQG), 217 to 240 (ASGP…GLEN), and 241 to 259 (LKKL…PSLE). N191 and N199 each carry an N-linked (GlcNAc...) asparagine glycan. Intrachain disulfides connect C275–C346, C276–C292, C276–C356, and C292–C338. The N-linked (GlcNAc...) asparagine glycan is linked to N293. A Sulfotyrosine modification is found at Y335. Residues 367-387 (VLIWFISILAITGNVAVLVVL) traverse the membrane as a helical segment. The Cytoplasmic segment spans residues 388 to 398 (TTSQYKLTVPR). Residues 399 to 421 (FLMCNLAFADLCIGIYLLLIASV) form a helical membrane-spanning segment. Topologically, residues 422 to 443 (DVHTRTLYHNYAIDWQTGAGCA) are extracellular. A disulfide bond links C442 and C517. The helical transmembrane segment at 444–465 (DCWLFTVFASELSVYTLTAITL) threads the bilayer. Residues 466 to 485 (ERWHTITHAMQLDCKVQLRH) are Cytoplasmic-facing. The helical transmembrane segment at 486–508 (AASIMVIGWIFSSAAALFPIFGV) threads the bilayer. Topologically, residues 509–528 (SSYMKVSICLPMDIDSPLSQ) are extracellular. Residues 529–550 (LYVMFLLVLNVLAFVVICGCYL) form a helical membrane-spanning segment. Topologically, residues 551-573 (HIYLTVRNPNIVSSASDTRIAKR) are cytoplasmic. Residues 574-597 (MATLIFTDFLCMAPISFFAISASL) traverse the membrane as a helical segment. Topologically, residues 598–608 (KVPLITVSKAK) are extracellular. The chain crosses the membrane as a helical span at residues 609–630 (ILLVLFYPINSCANPFLYAIFT). Residues 631-695 (KNFRRDLFIL…LAPLNHLAQN (65 aa)) are Cytoplasmic-facing. A disordered region spans residues 658–677 (TSSTAHNSHPRNGHSSSVSR).

The protein belongs to the G-protein coupled receptor 1 family. FSH/LSH/TSH subfamily. As to quaternary structure, homotrimer. Functions as a homotrimer binding the FSH hormone heterodimer composed of CGA and FSHB. Interacts with ARRB2. Interacts with APPL2; interaction is independent of follicle stimulating hormone stimulation. Post-translationally, N-glycosylated; indirectly required for FSH-binding, possibly via a conformational change that allows high affinity binding of hormone. Sulfated.

Its subcellular location is the cell membrane. G protein-coupled receptor for follitropin, the follicle-stimulating hormone. Through cAMP production activates the downstream PI3K-AKT and ERK1/ERK2 signaling pathways. The polypeptide is Follicle-stimulating hormone receptor (FSHR) (Cavia porcellus (Guinea pig)).